Consider the following 212-residue polypeptide: High frequency lysogenization protein HflD homolog (212 aa).

It belongs to the HflD family.

The protein localises to the cytoplasm. It localises to the cell inner membrane. This is High frequency lysogenization protein HflD homolog from Stutzerimonas stutzeri (strain A1501) (Pseudomonas stutzeri).